An 889-amino-acid chain; its full sequence is Coatomer subunit beta' (889 aa).

WD repeat units lie at residues 11-41 (NRSD…ELWN), 53-83 (VTET…RVFN), 95-125 (AHPD…KLWN), 138-169 (GHEH…KVWS), 182-214 (GQER…KIWD), and 226-256 (GHMS…KIWN). The residue at position 326 (serine 326) is a Phosphoserine. Residues 806-889 (CGAEGLPGSS…AVPEPVEEES (84 aa)) form a disordered region. The segment covering 836-864 (DENKEAEVEDSEFKESNSEAVEAEKKEEE) has biased composition (basic and acidic residues). A compositionally biased stretch (low complexity) spans 866–879 (PQQQQSEQQPEQGE).

The protein belongs to the WD repeat COPB2 family. As to quaternary structure, oligomeric complex that consists of at least the alpha, beta, beta', gamma, delta, epsilon and zeta subunits. Interacts with the ESCRT-0 subunit VPS27.

It is found in the cytoplasm. It localises to the golgi apparatus membrane. The protein resides in the cytoplasmic vesicle. Its subcellular location is the COPI-coated vesicle membrane. Functionally, the coatomer is a cytosolic protein complex that binds to dilysine motifs and reversibly associates with Golgi non-clathrin-coated vesicles, which further mediate biosynthetic protein transport from the ER, via the Golgi up to the trans Golgi network. Coatomer complex is required for budding from Golgi membranes, and is essential for the retrograde Golgi-to-ER transport of dilysine-tagged proteins. This is Coatomer subunit beta' (SEC27) from Saccharomyces cerevisiae (strain ATCC 204508 / S288c) (Baker's yeast).